Consider the following 3462-residue polypeptide: Extracellular matrix-binding protein EbhA (3462 aa).

Over residues 1–19 (MVQQSTTVAEAQGNEQKAN) the composition is skewed to polar residues. The tract at residues 1 to 21 (MVQQSTTVAEAQGNEQKANNV) is disordered. 19 consecutive FIVAR domains span residues 24–82 (AMDK…INQA), 150–208 (AMGN…VEQA), 276–334 (AMTQ…ITAA), 402–460 (AMTQ…IQQA), 528–586 (AMTN…VEQA), 654–712 (AMTQ…VAQA), 780–838 (AMGT…VTQA), 906–964 (AMSN…ITRA), 1032–1093 (AMDQ…ITNE), 1158–1216 (AMEL…VNGA), 1284–1342 (AMGN…VEQA), 1410–1467 (AMHG…INQA), 1535–1593 (LMDA…VSSA), 1661–1719 (AMEA…VEQL), 1787–1845 (AMQA…VEQL), 1913–1971 (AMET…VDQV), 2039–2093 (SMDQ…VDQA), 2161–2220 (AMDQ…VIKL), and 2415–2471 (AMET…INGA). Residues 3267-3289 (VIKNAIGVVGISGLLASFWFFIA) traverse the membrane as a helical segment. Residues 3365 to 3462 (RRKEDEEDVE…KKKKAKKNKK (98 aa)) form a disordered region. 2 stretches are compositionally biased toward basic and acidic residues: residues 3380–3390 (TDEKVLKDNEH) and 3429–3439 (QKDNQSKDKKS). Basic residues predominate over residues 3444 to 3462 (TSKKVAAKKKKKKAKKNKK).

Its subcellular location is the cell membrane. This Staphylococcus aureus (strain Newman) protein is Extracellular matrix-binding protein EbhA (ebhA).